Here is an 809-residue protein sequence, read N- to C-terminus: Trimethylamine-N-oxide reductase 2 (809 aa).

Residues 1–31 (MTLTRREFIKHSGIAAGTLVVTSAAPLPAWA) constitute a signal peptide (tat-type signal). Position 176 (serine 176) interacts with Mo-bis(molybdopterin guanine dinucleotide).

The protein belongs to the prokaryotic molybdopterin-containing oxidoreductase family. Requires Mo-bis(molybdopterin guanine dinucleotide) as cofactor. Post-translationally, predicted to be exported by the Tat system. The position of the signal peptide cleavage has not been experimentally proven.

It localises to the periplasm. The catalysed reaction is trimethylamine + 2 Fe(III)-[cytochrome c] + H2O = trimethylamine N-oxide + 2 Fe(II)-[cytochrome c] + 3 H(+). Reduces trimethylamine-N-oxide (TMAO) into trimethylamine; an anaerobic reaction coupled to energy-yielding reactions. Can also reduce other N- and S-oxide compounds such as 4-methylmorpholine-N-oxide and biotin sulfoxide (BSO), but with a lower catalytic efficiency. The sequence is that of Trimethylamine-N-oxide reductase 2 (torZ) from Escherichia coli O6:H1 (strain CFT073 / ATCC 700928 / UPEC).